Consider the following 126-residue polypeptide: uncharacterized protein (126 aa).

This is an uncharacterized protein from Invertebrate iridescent virus 6 (IIV-6).